Here is a 274-residue protein sequence, read N- to C-terminus: Putative phosphoenolpyruvate synthase regulatory protein (274 aa).

157–164 contacts ADP; it reads GVSRCGKT.

It belongs to the pyruvate, phosphate/water dikinase regulatory protein family. PSRP subfamily.

It catalyses the reaction [pyruvate, water dikinase] + ADP = [pyruvate, water dikinase]-phosphate + AMP + H(+). The catalysed reaction is [pyruvate, water dikinase]-phosphate + phosphate + H(+) = [pyruvate, water dikinase] + diphosphate. Its function is as follows. Bifunctional serine/threonine kinase and phosphorylase involved in the regulation of the phosphoenolpyruvate synthase (PEPS) by catalyzing its phosphorylation/dephosphorylation. The chain is Putative phosphoenolpyruvate synthase regulatory protein from Bordetella avium (strain 197N).